Here is a 456-residue protein sequence, read N- to C-terminus: MLNNAMSVVILAAGKGTRMYSDLPKVLHTLAGKAMVQHVIDAANELGAAHVHLVYGHGGDLLKQALKDDNLNWVLQAEQLGTGHAMQQAAPFFADDEDILMLYGDVPLISVETLQRLRDAKPQGGIGLLTVKLDDPTGYGRITRENGKVTGIVEHKDATDELRQIQEINTGILIANGADMKRWLAKLTNNNAQGEYYITDIIALAYQEGREIVAVHPQRLSEVEGVNNRLQLSRLERVYQSEQAEKLLLAGVMLRDPARFDLRGTLTHGRDVEIDTNVIIEGNVTLGHRVKIGTGCVIKNSVIGDDCEISPYTVVEDANLAAACTIGPFARLRPGAELLEGAHVGNFVEMKKARLGKGSKAGHLTYLGDAEIGDNVNIGAGTITCNYDGANKFKTIIGDDVFVGSDTQLVAPVTVGKGATIAAGTTVTRNVGENALAISRVPQTQKEGWRRPVKKK.

Positions M1–R229 are pyrophosphorylase. UDP-N-acetyl-alpha-D-glucosamine contacts are provided by residues L11–G14, K25, Q76, G81–T82, Y103–D105, G140, E154, N169, and N227. D105 lines the Mg(2+) pocket. Position 227 (N227) interacts with Mg(2+). Positions L230–A250 are linker. Residues G251 to K456 form an N-acetyltransferase region. R333 and K351 together coordinate UDP-N-acetyl-alpha-D-glucosamine. H363 serves as the catalytic Proton acceptor. UDP-N-acetyl-alpha-D-glucosamine-binding residues include Y366 and N377. Acetyl-CoA-binding positions include A380, N386 to Y387, S405, A423, and R440.

In the N-terminal section; belongs to the N-acetylglucosamine-1-phosphate uridyltransferase family. This sequence in the C-terminal section; belongs to the transferase hexapeptide repeat family. As to quaternary structure, homotrimer. The cofactor is Mg(2+).

It is found in the cytoplasm. The enzyme catalyses alpha-D-glucosamine 1-phosphate + acetyl-CoA = N-acetyl-alpha-D-glucosamine 1-phosphate + CoA + H(+). It carries out the reaction N-acetyl-alpha-D-glucosamine 1-phosphate + UTP + H(+) = UDP-N-acetyl-alpha-D-glucosamine + diphosphate. The protein operates within nucleotide-sugar biosynthesis; UDP-N-acetyl-alpha-D-glucosamine biosynthesis; N-acetyl-alpha-D-glucosamine 1-phosphate from alpha-D-glucosamine 6-phosphate (route II): step 2/2. It functions in the pathway nucleotide-sugar biosynthesis; UDP-N-acetyl-alpha-D-glucosamine biosynthesis; UDP-N-acetyl-alpha-D-glucosamine from N-acetyl-alpha-D-glucosamine 1-phosphate: step 1/1. Its pathway is bacterial outer membrane biogenesis; LPS lipid A biosynthesis. Its function is as follows. Catalyzes the last two sequential reactions in the de novo biosynthetic pathway for UDP-N-acetylglucosamine (UDP-GlcNAc). The C-terminal domain catalyzes the transfer of acetyl group from acetyl coenzyme A to glucosamine-1-phosphate (GlcN-1-P) to produce N-acetylglucosamine-1-phosphate (GlcNAc-1-P), which is converted into UDP-GlcNAc by the transfer of uridine 5-monophosphate (from uridine 5-triphosphate), a reaction catalyzed by the N-terminal domain. The sequence is that of Bifunctional protein GlmU from Escherichia coli (strain 55989 / EAEC).